Here is a 260-residue protein sequence, read N- to C-terminus: Hemin import ATP-binding protein HmuV (260 aa).

An ABC transporter domain is found at 2–239 (IRAENITLIR…ETIARVYGIG (238 aa)). 34–41 (GPNGAGKS) is a binding site for ATP.

This sequence belongs to the ABC transporter superfamily. Heme (hemin) importer (TC 3.A.1.14.5) family. As to quaternary structure, the complex is composed of two ATP-binding proteins (HmuV), two transmembrane proteins (HmuU) and a solute-binding protein (HmuT).

It localises to the cell inner membrane. Functionally, part of the ABC transporter complex HmuTUV involved in hemin import. Responsible for energy coupling to the transport system. In Agrobacterium fabrum (strain C58 / ATCC 33970) (Agrobacterium tumefaciens (strain C58)), this protein is Hemin import ATP-binding protein HmuV.